The sequence spans 355 residues: NADH dehydrogenase [ubiquinone] 1 alpha subcomplex subunit 10, mitochondrial (355 aa).

Residues 1 to 35 (MALRLLRLVPASASARGLAAGAQRVGRIHTSVHCK) constitute a mitochondrion transit peptide. Lys-122 is modified (N6-acetyllysine; alternate). Lys-122 is subject to N6-succinyllysine; alternate. Ser-250 carries the post-translational modification Phosphoserine; by PINK1. Lys-285 bears the N6-succinyllysine mark.

This sequence belongs to the complex I NDUFA10 subunit family. As to quaternary structure, complex I is composed of 45 different subunits. This a component of the hydrophobic protein fraction. The cofactor is FAD. Phosphorylation at Ser-250 by PINK1 is required for the binding and/or reduction of the complex I substrate ubiquinone. As to expression, expressed in the head and flagellum of epididymal sperm but not in testicular sperm (at protein level).

Its subcellular location is the mitochondrion matrix. Functionally, accessory subunit of the mitochondrial membrane respiratory chain NADH dehydrogenase (Complex I), that is believed not to be involved in catalysis. Complex I functions in the transfer of electrons from NADH to the respiratory chain. The immediate electron acceptor for the enzyme is believed to be ubiquinone. The protein is NADH dehydrogenase [ubiquinone] 1 alpha subcomplex subunit 10, mitochondrial (Ndufa10) of Rattus norvegicus (Rat).